The following is a 79-amino-acid chain: Defensin-like protein 54 (79 aa).

Positions 1 to 27 are cleaved as a signal peptide; sequence MGIKKTSATVFLVIILTISFSYYDVEA. Intrachain disulfides connect Cys39-Cys76, Cys43-Cys67, Cys52-Cys74, and Cys56-Cys75.

It belongs to the DEFL family.

Its subcellular location is the secreted. The polypeptide is Defensin-like protein 54 (Arabidopsis thaliana (Mouse-ear cress)).